Consider the following 444-residue polypeptide: Methylenetetrahydrofolate--tRNA-(uracil-5-)-methyltransferase TrmFO (444 aa).

9–14 provides a ligand contact to FAD; that stretch reads GAGMAG.

It belongs to the MnmG family. TrmFO subfamily. It depends on FAD as a cofactor.

It localises to the cytoplasm. It catalyses the reaction uridine(54) in tRNA + (6R)-5,10-methylene-5,6,7,8-tetrahydrofolate + NADH + H(+) = 5-methyluridine(54) in tRNA + (6S)-5,6,7,8-tetrahydrofolate + NAD(+). The enzyme catalyses uridine(54) in tRNA + (6R)-5,10-methylene-5,6,7,8-tetrahydrofolate + NADPH + H(+) = 5-methyluridine(54) in tRNA + (6S)-5,6,7,8-tetrahydrofolate + NADP(+). Its function is as follows. Catalyzes the folate-dependent formation of 5-methyl-uridine at position 54 (M-5-U54) in all tRNAs. The polypeptide is Methylenetetrahydrofolate--tRNA-(uracil-5-)-methyltransferase TrmFO (Cereibacter sphaeroides (strain ATCC 17025 / ATH 2.4.3) (Rhodobacter sphaeroides)).